Here is a 209-residue protein sequence, read N- to C-terminus: NAD-reducing hydrogenase HoxS subunit delta (209 aa).

Tetramer of an alpha and a gamma subunits (flavin-containing dimer), and a delta and a nickel-containing beta subunits (hydrogenase dimer). The cofactor is [4Fe-4S] cluster. Requires [3Fe-4S] cluster as cofactor. [2Fe-2S] cluster serves as cofactor. FMN is required as a cofactor. It depends on Ni(2+) as a cofactor.

It localises to the cytoplasm. The enzyme catalyses H2 + NAD(+) = NADH + H(+). The protein is NAD-reducing hydrogenase HoxS subunit delta (hoxY) of Cupriavidus necator (strain ATCC 17699 / DSM 428 / KCTC 22496 / NCIMB 10442 / H16 / Stanier 337) (Ralstonia eutropha).